A 178-amino-acid polypeptide reads, in one-letter code: Cytidylate kinase (178 aa).

Position 7-15 (Gly-7–Thr-15) interacts with ATP.

This sequence belongs to the cytidylate kinase family. Type 2 subfamily.

It localises to the cytoplasm. It catalyses the reaction CMP + ATP = CDP + ADP. The enzyme catalyses dCMP + ATP = dCDP + ADP. This is Cytidylate kinase from Methanococcus maripaludis (strain C5 / ATCC BAA-1333).